A 371-amino-acid chain; its full sequence is tRNA-specific 2-thiouridylase MnmA (371 aa).

ATP-binding positions include 16–23 and methionine 42; that span reads GMSGGVDS. The segment at 102 to 104 is interaction with target base in tRNA; that stretch reads NPD. The active-site Nucleophile is cysteine 107. The cysteines at positions 107 and 204 are disulfide-linked. Glycine 132 serves as a coordination point for ATP. The segment at 154–156 is interaction with tRNA; sequence KDQ. The active-site Cysteine persulfide intermediate is cysteine 204. An interaction with tRNA region spans residues 316–317; it reads RY.

It belongs to the MnmA/TRMU family.

It is found in the cytoplasm. The catalysed reaction is S-sulfanyl-L-cysteinyl-[protein] + uridine(34) in tRNA + AH2 + ATP = 2-thiouridine(34) in tRNA + L-cysteinyl-[protein] + A + AMP + diphosphate + H(+). In terms of biological role, catalyzes the 2-thiolation of uridine at the wobble position (U34) of tRNA, leading to the formation of s(2)U34. The chain is tRNA-specific 2-thiouridylase MnmA from Shewanella halifaxensis (strain HAW-EB4).